We begin with the raw amino-acid sequence, 149 residues long: UPF0260 protein RCAP_rcc02083 (149 aa).

It belongs to the UPF0260 family.

This chain is UPF0260 protein RCAP_rcc02083, found in Rhodobacter capsulatus (strain ATCC BAA-309 / NBRC 16581 / SB1003).